We begin with the raw amino-acid sequence, 164 residues long: Crossover junction endodeoxyribonuclease RuvC (164 aa).

Active-site residues include D7, E67, and D140. Mg(2+) contacts are provided by D7, E67, and D140.

This sequence belongs to the RuvC family. Homodimer which binds Holliday junction (HJ) DNA. The HJ becomes 2-fold symmetrical on binding to RuvC with unstacked arms; it has a different conformation from HJ DNA in complex with RuvA. In the full resolvosome a probable DNA-RuvA(4)-RuvB(12)-RuvC(2) complex forms which resolves the HJ. Mg(2+) is required as a cofactor.

Its subcellular location is the cytoplasm. The catalysed reaction is Endonucleolytic cleavage at a junction such as a reciprocal single-stranded crossover between two homologous DNA duplexes (Holliday junction).. The RuvA-RuvB-RuvC complex processes Holliday junction (HJ) DNA during genetic recombination and DNA repair. Endonuclease that resolves HJ intermediates. Cleaves cruciform DNA by making single-stranded nicks across the HJ at symmetrical positions within the homologous arms, yielding a 5'-phosphate and a 3'-hydroxyl group; requires a central core of homology in the junction. The consensus cleavage sequence is 5'-(A/T)TT(C/G)-3'. Cleavage occurs on the 3'-side of the TT dinucleotide at the point of strand exchange. HJ branch migration catalyzed by RuvA-RuvB allows RuvC to scan DNA until it finds its consensus sequence, where it cleaves and resolves the cruciform DNA. This chain is Crossover junction endodeoxyribonuclease RuvC, found in Chloroflexus aggregans (strain MD-66 / DSM 9485).